The following is a 261-amino-acid chain: MTHQTHAYHMVNPSPWPLTGALSALLMSSGLTMWFHFNSLILLTTGLVTNILTMYQWWRDVIRESTFQGHHTPVVQKGLRYGMVLFIISEVLFFTGFFWAFYHSSLAPTPELGGCWPPTGINPLNPLEVPLLNTSVLLASGVSITWAHHSLMEGNRKQMLQALFITIALGVYFTLLQASEYHEASFTISDGVYGSTFFVATGFHGLHVIIGSTFLIVCFLRQLKFHFTSDHHFGFEAAAWYWHFVDVVWLFLYVSIYWWGS.

Residues 1 to 15 (MTHQTHAYHMVNPSP) are Mitochondrial matrix-facing. Residues 16–34 (WPLTGALSALLMSSGLTMW) traverse the membrane as a helical segment. The Mitochondrial intermembrane portion of the chain corresponds to 35 to 40 (FHFNSL). A helical transmembrane segment spans residues 41-66 (ILLTTGLVTNILTMYQWWRDVIREST). Residues 67–72 (FQGHHT) are Mitochondrial matrix-facing. A helical transmembrane segment spans residues 73 to 105 (PVVQKGLRYGMVLFIISEVLFFTGFFWAFYHSS). Topologically, residues 106–128 (LAPTPELGGCWPPTGINPLNPLE) are mitochondrial intermembrane. The chain crosses the membrane as a helical span at residues 129-152 (VPLLNTSVLLASGVSITWAHHSLM). Residues 153-155 (EGN) are Mitochondrial matrix-facing. The chain crosses the membrane as a helical span at residues 156 to 183 (RKQMLQALFITIALGVYFTLLQASEYHE). At 184 to 190 (ASFTISD) the chain is on the mitochondrial intermembrane side. Residues 191-223 (GVYGSTFFVATGFHGLHVIIGSTFLIVCFLRQL) traverse the membrane as a helical segment. Topologically, residues 224-232 (KFHFTSDHH) are mitochondrial matrix. A helical transmembrane segment spans residues 233-256 (FGFEAAAWYWHFVDVVWLFLYVSI). At 257–261 (YWWGS) the chain is on the mitochondrial intermembrane side.

This sequence belongs to the cytochrome c oxidase subunit 3 family. In terms of assembly, component of the cytochrome c oxidase (complex IV, CIV), a multisubunit enzyme composed of 14 subunits. The complex is composed of a catalytic core of 3 subunits MT-CO1, MT-CO2 and MT-CO3, encoded in the mitochondrial DNA, and 11 supernumerary subunits COX4I, COX5A, COX5B, COX6A, COX6B, COX6C, COX7A, COX7B, COX7C, COX8 and NDUFA4, which are encoded in the nuclear genome. The complex exists as a monomer or a dimer and forms supercomplexes (SCs) in the inner mitochondrial membrane with NADH-ubiquinone oxidoreductase (complex I, CI) and ubiquinol-cytochrome c oxidoreductase (cytochrome b-c1 complex, complex III, CIII), resulting in different assemblies (supercomplex SCI(1)III(2)IV(1) and megacomplex MCI(2)III(2)IV(2)).

It localises to the mitochondrion inner membrane. It catalyses the reaction 4 Fe(II)-[cytochrome c] + O2 + 8 H(+)(in) = 4 Fe(III)-[cytochrome c] + 2 H2O + 4 H(+)(out). In terms of biological role, component of the cytochrome c oxidase, the last enzyme in the mitochondrial electron transport chain which drives oxidative phosphorylation. The respiratory chain contains 3 multisubunit complexes succinate dehydrogenase (complex II, CII), ubiquinol-cytochrome c oxidoreductase (cytochrome b-c1 complex, complex III, CIII) and cytochrome c oxidase (complex IV, CIV), that cooperate to transfer electrons derived from NADH and succinate to molecular oxygen, creating an electrochemical gradient over the inner membrane that drives transmembrane transport and the ATP synthase. Cytochrome c oxidase is the component of the respiratory chain that catalyzes the reduction of oxygen to water. Electrons originating from reduced cytochrome c in the intermembrane space (IMS) are transferred via the dinuclear copper A center (CU(A)) of subunit 2 and heme A of subunit 1 to the active site in subunit 1, a binuclear center (BNC) formed by heme A3 and copper B (CU(B)). The BNC reduces molecular oxygen to 2 water molecules using 4 electrons from cytochrome c in the IMS and 4 protons from the mitochondrial matrix. This chain is Cytochrome c oxidase subunit 3 (MT-CO3), found in Hippopotamus amphibius (Hippopotamus).